The primary structure comprises 316 residues: Methionyl-tRNA formyltransferase (316 aa).

117–120 (SLLP) contributes to the (6S)-5,6,7,8-tetrahydrofolate binding site.

Belongs to the Fmt family.

It carries out the reaction L-methionyl-tRNA(fMet) + (6R)-10-formyltetrahydrofolate = N-formyl-L-methionyl-tRNA(fMet) + (6S)-5,6,7,8-tetrahydrofolate + H(+). Attaches a formyl group to the free amino group of methionyl-tRNA(fMet). The formyl group appears to play a dual role in the initiator identity of N-formylmethionyl-tRNA by promoting its recognition by IF2 and preventing the misappropriation of this tRNA by the elongation apparatus. The chain is Methionyl-tRNA formyltransferase from Janthinobacterium sp. (strain Marseille) (Minibacterium massiliensis).